A 186-amino-acid chain; its full sequence is UPF0301 protein Nmul_A2478 (186 aa).

Belongs to the UPF0301 (AlgH) family.

The protein is UPF0301 protein Nmul_A2478 of Nitrosospira multiformis (strain ATCC 25196 / NCIMB 11849 / C 71).